Here is a 237-residue protein sequence, read N- to C-terminus: tRNA (guanine-N(1)-)-methyltransferase (237 aa).

S-adenosyl-L-methionine-binding positions include Gly-113 and 133–138 (MGDYIL).

Belongs to the RNA methyltransferase TrmD family. Homodimer.

It localises to the cytoplasm. The catalysed reaction is guanosine(37) in tRNA + S-adenosyl-L-methionine = N(1)-methylguanosine(37) in tRNA + S-adenosyl-L-homocysteine + H(+). Its function is as follows. Specifically methylates guanosine-37 in various tRNAs. This chain is tRNA (guanine-N(1)-)-methyltransferase, found in Wolinella succinogenes (strain ATCC 29543 / DSM 1740 / CCUG 13145 / JCM 31913 / LMG 7466 / NCTC 11488 / FDC 602W) (Vibrio succinogenes).